The following is a 709-amino-acid chain: Phosphoribosylformylglycinamidine synthase subunit PurL (709 aa).

Residue H36 is part of the active site. ATP is bound by residues Y39 and K80. E82 serves as a coordination point for Mg(2+). Substrate-binding positions include 83–86 (SHNH) and R105. The active-site Proton acceptor is H84. D106 serves as a coordination point for Mg(2+). Residue Q226 coordinates substrate. D252 contacts Mg(2+). 294–296 (ETQ) contributes to the substrate binding site. 2 residues coordinate ATP: D470 and G507. Substrate is bound at residue S510.

It belongs to the FGAMS family. Monomer. Part of the FGAM synthase complex composed of 1 PurL, 1 PurQ and 2 PurS subunits.

Its subcellular location is the cytoplasm. The enzyme catalyses N(2)-formyl-N(1)-(5-phospho-beta-D-ribosyl)glycinamide + L-glutamine + ATP + H2O = 2-formamido-N(1)-(5-O-phospho-beta-D-ribosyl)acetamidine + L-glutamate + ADP + phosphate + H(+). The protein operates within purine metabolism; IMP biosynthesis via de novo pathway; 5-amino-1-(5-phospho-D-ribosyl)imidazole from N(2)-formyl-N(1)-(5-phospho-D-ribosyl)glycinamide: step 1/2. Its function is as follows. Part of the phosphoribosylformylglycinamidine synthase complex involved in the purines biosynthetic pathway. Catalyzes the ATP-dependent conversion of formylglycinamide ribonucleotide (FGAR) and glutamine to yield formylglycinamidine ribonucleotide (FGAM) and glutamate. The FGAM synthase complex is composed of three subunits. PurQ produces an ammonia molecule by converting glutamine to glutamate. PurL transfers the ammonia molecule to FGAR to form FGAM in an ATP-dependent manner. PurS interacts with PurQ and PurL and is thought to assist in the transfer of the ammonia molecule from PurQ to PurL. The sequence is that of Phosphoribosylformylglycinamidine synthase subunit PurL from Saccharolobus islandicus (strain M.16.4 / Kamchatka #3) (Sulfolobus islandicus).